Consider the following 368-residue polypeptide: 3-dehydroquinate synthase (368 aa).

Residues 112 to 116 (GVIGD), 136 to 137 (TT), Lys149, and Lys158 each bind NAD(+). Residues Glu191, His256, and His273 each contribute to the Zn(2+) site.

This sequence belongs to the sugar phosphate cyclases superfamily. Dehydroquinate synthase family. Requires Co(2+) as cofactor. Zn(2+) serves as cofactor. NAD(+) is required as a cofactor.

The protein resides in the cytoplasm. It carries out the reaction 7-phospho-2-dehydro-3-deoxy-D-arabino-heptonate = 3-dehydroquinate + phosphate. It participates in metabolic intermediate biosynthesis; chorismate biosynthesis; chorismate from D-erythrose 4-phosphate and phosphoenolpyruvate: step 2/7. Its function is as follows. Catalyzes the conversion of 3-deoxy-D-arabino-heptulosonate 7-phosphate (DAHP) to dehydroquinate (DHQ). The sequence is that of 3-dehydroquinate synthase from Prochlorococcus marinus (strain NATL1A).